Reading from the N-terminus, the 215-residue chain is Large ribosomal subunit protein uL4 (215 aa).

The interval Arg43–Ser97 is disordered.

This sequence belongs to the universal ribosomal protein uL4 family. Part of the 50S ribosomal subunit.

Its function is as follows. One of the primary rRNA binding proteins, this protein initially binds near the 5'-end of the 23S rRNA. It is important during the early stages of 50S assembly. It makes multiple contacts with different domains of the 23S rRNA in the assembled 50S subunit and ribosome. In terms of biological role, forms part of the polypeptide exit tunnel. In Brachyspira pilosicoli (Serpulina pilosicoli), this protein is Large ribosomal subunit protein uL4.